The primary structure comprises 317 residues: Taste receptor type 2 member 14 (317 aa).

Residues 1–7 are Extracellular-facing; sequence MGGVIKS. Residues 8-28 traverse the membrane as a helical segment; the sequence is IFTFVLIVEFIIGNLGNSFIA. The Cytoplasmic segment spans residues 29-55; that stretch reads LVNCIDWVKGRKISSVDRILTALAISR. The helical transmembrane segment at 56 to 76 threads the bilayer; it reads ISLVWLIFGSWCVSVFFPALF. Residues 77–87 are Extracellular-facing; the sequence is ATEKMFRMLTN. Cholesterol contacts are provided by threonine 86 and tryptophan 89. Residues 88-108 form a helical membrane-spanning segment; sequence IWTVINHFSVWLATGLGTFYF. Over 109 to 129 the chain is Cytoplasmic; that stretch reads LKIANFSNSIFLYLKWRVKKV. The helical transmembrane segment at 130-150 threads the bilayer; it reads VLVLLLVTSVFLFLNIALINI. The Extracellular portion of the chain corresponds to 151–184; it reads HINASINGYRRNKTCSSDSSNFTRFSSLIVLTST. N-linked (GlcNAc...) asparagine glycosylation is found at asparagine 153, asparagine 162, and asparagine 171. Position 180 (valine 180) interacts with cholesterol. Residues 185-205 form a helical membrane-spanning segment; sequence VFIFIPFTLSLAMFLLLIFSM. Over 206–232 the chain is Cytoplasmic; the sequence is WKHRKKMQHTVKISGDASTKAHRGVKS. A helical transmembrane segment spans residues 233-253; it reads VITFFLLYAIFSLSFFISVWT. The Extracellular portion of the chain corresponds to 254 to 261; the sequence is SERLEENL. Residues 262–282 form a helical membrane-spanning segment; that stretch reads IILSQVMGMAYPSCHSCVLIL. The cholesterol site is built by serine 265 and methionine 268. Residues 283-317 lie on the Cytoplasmic side of the membrane; it reads GNKKLRQASLSVLLWLRYMFKDGEPSGHKEFRESS.

It belongs to the G-protein coupled receptor T2R family. In terms of assembly, core component of the TAS2R14-GNAI1 complex, consisting of TAS2R14, GNAI1, GNB1 and GNG2; within the complex interacts with GNAI1. Core component of the TAS2R14-GNAT3 complex, consisting of TAS2R14, GNAT3, GNB1 and GNG2; within the complex interacts with GNAT3. Core component of the TAS2R14-GNAS2 complex, consisting of TAS2R14, GNAS2, GNB1 and GNG2; within the complex interacts with GNAS2. As to expression, highly expressed in cerebellum, pancreas, small intestine and thymus; also expressed in adipose, aorta, skin and tongue, but at significantly lower levels. Expressed in subsets of taste receptor cells of the tongue and palate epithelium and exclusively in gustducin-positive cells. Expressed in testis.

It is found in the membrane. The enzyme catalyses Ca(2+)(in) = Ca(2+)(out). The catalysed reaction is 3',5'-cyclic AMP(in) = 3',5'-cyclic AMP(out). With respect to regulation, basal activity is enhanced by binding to bitter tastants, such as flufenamic acid and aristolochic acid. Regulated by cholesterol in a concentration-dependent manner. In terms of biological role, gustducin-linked G-protein coupled receptor that plays a role in the perception of bitterness. The activity of this receptor stimulates GNAT3, activating the gustducin G-protein pathway. Likely plays a role in sensing the chemical composition of the gastrointestinal content and other extra-oral tissues via the inhibitory G-protein pathways. The sequence is that of Taste receptor type 2 member 14 (TAS2R14) from Homo sapiens (Human).